The sequence spans 424 residues: Histidinol dehydrogenase homolog (424 aa).

Residues glutamine 250 and histidine 253 each coordinate Zn(2+). Catalysis depends on proton acceptor residues glutamate 318 and histidine 319. 2 residues coordinate Zn(2+): aspartate 352 and histidine 411.

The protein belongs to the histidinol dehydrogenase family. The cofactor is Zn(2+).

The sequence is that of Histidinol dehydrogenase homolog from Shouchella clausii (strain KSM-K16) (Alkalihalobacillus clausii).